We begin with the raw amino-acid sequence, 368 residues long: Methylthioribose-1-phosphate isomerase (368 aa).

Substrate is bound by residues 54-56 (RGA), Arg91, and Gln204. The active-site Proton donor is Asp245. 255–256 (NK) provides a ligand contact to substrate.

The protein belongs to the eIF-2B alpha/beta/delta subunits family. MtnA subfamily.

It catalyses the reaction 5-(methylsulfanyl)-alpha-D-ribose 1-phosphate = 5-(methylsulfanyl)-D-ribulose 1-phosphate. Its pathway is amino-acid biosynthesis; L-methionine biosynthesis via salvage pathway; L-methionine from S-methyl-5-thio-alpha-D-ribose 1-phosphate: step 1/6. Functionally, catalyzes the interconversion of methylthioribose-1-phosphate (MTR-1-P) into methylthioribulose-1-phosphate (MTRu-1-P). In Gluconobacter oxydans (strain 621H) (Gluconobacter suboxydans), this protein is Methylthioribose-1-phosphate isomerase.